A 208-amino-acid polypeptide reads, in one-letter code: Uracil phosphoribosyltransferase (208 aa).

5-phospho-alpha-D-ribose 1-diphosphate contacts are provided by residues Arg78, Arg103, and 130-138 (DPMLATGGS). Uracil contacts are provided by residues Ile193 and 198–200 (GDA). Asp199 serves as a coordination point for 5-phospho-alpha-D-ribose 1-diphosphate.

This sequence belongs to the UPRTase family. It depends on Mg(2+) as a cofactor.

It carries out the reaction UMP + diphosphate = 5-phospho-alpha-D-ribose 1-diphosphate + uracil. Its pathway is pyrimidine metabolism; UMP biosynthesis via salvage pathway; UMP from uracil: step 1/1. Allosterically activated by GTP. Its function is as follows. Catalyzes the conversion of uracil and 5-phospho-alpha-D-ribose 1-diphosphate (PRPP) to UMP and diphosphate. This is Uracil phosphoribosyltransferase from Acholeplasma laidlawii (strain PG-8A).